The chain runs to 599 residues: Aspartate--tRNA(Asp/Asn) ligase (599 aa).

E172 provides a ligand contact to L-aspartate. The interval 196–199 (QLFK) is aspartate. Position 218 (R218) interacts with L-aspartate. ATP-binding positions include 218–220 (RDE) and Q227. H454 contacts L-aspartate. Residue E488 participates in ATP binding. L-aspartate is bound at residue R495. 540-543 (GLDR) serves as a coordination point for ATP.

Belongs to the class-II aminoacyl-tRNA synthetase family. Type 1 subfamily. As to quaternary structure, homodimer.

The protein resides in the cytoplasm. It carries out the reaction tRNA(Asx) + L-aspartate + ATP = L-aspartyl-tRNA(Asx) + AMP + diphosphate. Functionally, aspartyl-tRNA synthetase with relaxed tRNA specificity since it is able to aspartylate not only its cognate tRNA(Asp) but also tRNA(Asn). Reaction proceeds in two steps: L-aspartate is first activated by ATP to form Asp-AMP and then transferred to the acceptor end of tRNA(Asp/Asn). The sequence is that of Aspartate--tRNA(Asp/Asn) ligase from Methylibium petroleiphilum (strain ATCC BAA-1232 / LMG 22953 / PM1).